Here is a 401-residue protein sequence, read N- to C-terminus: Argininosuccinate synthase (401 aa).

8–16 is a binding site for ATP; it reads AYSGGLDTS. Tyr87 is a binding site for L-citrulline. Gly117 is an ATP binding site. Residues Thr119, Asn123, and Asp124 each coordinate L-aspartate. L-citrulline is bound at residue Asn123. L-citrulline is bound by residues Arg127, Ser175, Glu259, and Tyr271.

The protein belongs to the argininosuccinate synthase family. Type 1 subfamily. As to quaternary structure, homotetramer.

The protein resides in the cytoplasm. It catalyses the reaction L-citrulline + L-aspartate + ATP = 2-(N(omega)-L-arginino)succinate + AMP + diphosphate + H(+). The protein operates within amino-acid biosynthesis; L-arginine biosynthesis; L-arginine from L-ornithine and carbamoyl phosphate: step 2/3. This Arthrobacter sp. (strain FB24) protein is Argininosuccinate synthase.